The primary structure comprises 644 residues: SURP and G-patch domain-containing protein 1 (644 aa).

Residues 44 to 54 (REIEARMEQKA) show a composition bias toward basic and acidic residues. 2 disordered regions span residues 44–74 (REIEARMEQKARQSHVASPQPPHPGEVADAQ) and 98–122 (AQASTDSAPRAPPSSPAPSSLKRPL). The residue at position 128 (threonine 128) is a Phosphothreonine. Residues 188 to 230 (VIEKLARFVAEGGPELEKVAMEDYKDNPAFTFLHDKNSREFLY) form an SURP motif 1 repeat. Serine 253 is subject to Phosphoserine. One copy of the SURP motif 2 repeat lies at 263 to 306 (LAEKLARFIADGGPEVETIALQNNRENQAFSFLYDPNSQGYRYY). 2 disordered regions span residues 316 to 342 (AKAGSTGSLPAPVPNPSLRRKSAPEAL) and 360 to 412 (PAVN…PSPL). Residue serine 323 is modified to Phosphoserine. A compositionally biased stretch (pro residues) spans 360–369 (PAVNPTPSIP). The Nuclear localization signal motif lies at 379–385 (KRKRKSR). 4 positions are modified to phosphoserine: serine 408, serine 410, serine 413, and serine 484. The G-patch domain occupies 561–608 (VENIGYQMLMKMGWKEGEGLGTEGQGIKNPVNKGATTIDGAGFGIDRP).

In terms of assembly, component of the spliceosome.

The protein localises to the nucleus. Plays a role in pre-mRNA splicing. This Rattus norvegicus (Rat) protein is SURP and G-patch domain-containing protein 1 (Sugp1).